The primary structure comprises 84 residues: U4-theraphotoxin-Hhn1b (84 aa).

The N-terminal stretch at 1-22 (MKVTLIAILTCAAVLVLHTTAA) is a signal peptide. The propeptide occupies 23-47 (EELEESQLMEVGMPDTELAAVDEER). Disulfide bonds link C51/C65, C55/C76, and C70/C81.

This sequence belongs to the neurotoxin 12 (Hwtx-2) family. 02 (Hwtx-2) subfamily. In terms of tissue distribution, expressed by the venom gland.

Its subcellular location is the secreted. Its function is as follows. Postsynaptic neurotoxin. The chain is U4-theraphotoxin-Hhn1b from Cyriopagopus hainanus (Chinese bird spider).